Consider the following 603-residue polypeptide: Autophagy-related protein 13a (603 aa).

Ser248 carries the phosphoserine modification. Disordered stretches follow at residues 258–477 and 498–518; these read PSPG…DDLD and SHSLDRRKTSSSISQSLPLGR. Polar residues predominate over residues 301-315; sequence ATPNQSFSPAQSHQL. Positions 320-331 are enriched in basic and acidic residues; that stretch reads HDFHWSRTDAFG. 2 stretches are compositionally biased toward polar residues: residues 371-386 and 419-437; these read IPSSATLNRYVSSNFS and SSRSGESPSGLMNQYPTQK. Residues 453–473 show a composition bias toward low complexity; sequence LSSSDSPRFAFSRSPSRLSSQ.

The protein belongs to the ATG13 family. Plant subfamily. In terms of assembly, interacts with ATG1A. Interacts with ATG11 and ATG101. Post-translationally, phosphorylated during nutrient starvation. Dephosphorylated in nutrient-rich conditions.

The protein resides in the cytoplasmic vesicle. It localises to the autophagosome. Functionally, involved in autophagy in a nutritional condition dependent manner. The ATG1-ATG13 protein kinase complex regulates downstream events required for autophagosome enclosure and/or vacuolar delivery. Becomes a target of autophagy under nutrient starvation. Connects autophagy to plant nutritional status. The sequence is that of Autophagy-related protein 13a from Arabidopsis thaliana (Mouse-ear cress).